A 443-amino-acid chain; its full sequence is Zinc finger protein 713 (443 aa).

The span at 1 to 10 (MPSQNAVFSQ) shows a compositional bias: polar residues. 2 disordered regions span residues 1 to 23 (MPSQ…NDGS) and 99 to 118 (DTHP…TSQN). A KRAB domain is found at 32–102 (LTFQDVAVDF…ERDSLLDTHP (71 aa)). Over residues 99-112 (DTHPDGENRPEIKK) the composition is skewed to basic and acidic residues. Residues 255–280 (HTAEKPSECGKAFSHTSSLSQPQMLL) form a C2H2-type 1; degenerate zinc finger. 5 C2H2-type zinc fingers span residues 286–308 (YKCD…QRIH), 314–336 (FICN…LRIH), 342–364 (YKCN…HRLH), 370–392 (YECG…ERTH), and 398–420 (YKCN…RKIH).

This sequence belongs to the krueppel C2H2-type zinc-finger protein family. In terms of tissue distribution, expressed in fetal and adult brain.

It localises to the nucleus. Functionally, may be involved in transcriptional regulation. The polypeptide is Zinc finger protein 713 (Homo sapiens (Human)).